The primary structure comprises 365 residues: Phospho-N-acetylmuramoyl-pentapeptide-transferase (365 aa).

10 helical membrane passes run 22 to 42, 74 to 94, 95 to 115, 134 to 154, 168 to 188, 201 to 221, 240 to 260, 267 to 287, 292 to 312, and 342 to 362; these read YISV…LALG, TMGG…WGNL, TSIY…IGFF, KFAL…YLLS, SLYI…IING, GLAI…AYIE, LAEV…FLWF, VFMG…IAVM, LIFF…MLQV, and KVVI…FAAI.

Belongs to the glycosyltransferase 4 family. MraY subfamily. It depends on Mg(2+) as a cofactor.

The protein resides in the cell inner membrane. It catalyses the reaction UDP-N-acetyl-alpha-D-muramoyl-L-alanyl-gamma-D-glutamyl-meso-2,6-diaminopimeloyl-D-alanyl-D-alanine + di-trans,octa-cis-undecaprenyl phosphate = di-trans,octa-cis-undecaprenyl diphospho-N-acetyl-alpha-D-muramoyl-L-alanyl-D-glutamyl-meso-2,6-diaminopimeloyl-D-alanyl-D-alanine + UMP. It participates in cell wall biogenesis; peptidoglycan biosynthesis. In terms of biological role, catalyzes the initial step of the lipid cycle reactions in the biosynthesis of the cell wall peptidoglycan: transfers peptidoglycan precursor phospho-MurNAc-pentapeptide from UDP-MurNAc-pentapeptide onto the lipid carrier undecaprenyl phosphate, yielding undecaprenyl-pyrophosphoryl-MurNAc-pentapeptide, known as lipid I. In Francisella tularensis subsp. holarctica (strain OSU18), this protein is Phospho-N-acetylmuramoyl-pentapeptide-transferase.